The primary structure comprises 144 residues: Phosphomevalonate dehydratase small subunit (144 aa).

Residue Ser-65 is the Proton acceptor of the active site.

It belongs to the AcnX type II small subunit family. Heterodimer composed of a large subunit (PMDh-L) and a small subunit (PMDh-S).

It carries out the reaction (R)-5-phosphomevalonate = (2E)-3-methyl-5-phosphooxypent-2-enoate + H2O. It functions in the pathway isoprenoid biosynthesis; isopentenyl diphosphate biosynthesis via mevalonate pathway. Functionally, component of a hydro-lyase that catalyzes the dehydration of mevalonate 5-phosphate (MVA5P) to form trans-anhydromevalonate 5-phosphate (tAHMP). Involved in the archaeal mevalonate (MVA) pathway, which provides fundamental precursors for isoprenoid biosynthesis, such as isopentenyl diphosphate (IPP) and dimethylallyl diphosphate (DMAPP). This is Phosphomevalonate dehydratase small subunit from Methanosarcina acetivorans (strain ATCC 35395 / DSM 2834 / JCM 12185 / C2A).